The chain runs to 73 residues: Putative membrane protein insertion efficiency factor (73 aa).

This sequence belongs to the UPF0161 family.

It localises to the cell inner membrane. Functionally, could be involved in insertion of integral membrane proteins into the membrane. This is Putative membrane protein insertion efficiency factor from Rickettsia bellii (strain RML369-C).